The chain runs to 60 residues: WQPPWYCKEPVRIGSCKKQFSSFYFKWTAKKCLPFLFSGCGGNANRFQTIGECRKKCLGK.

The region spanning 7–57 (CKEPVRIGSCKKQFSSFYFKWTAKKCLPFLFSGCGGNANRFQTIGECRKKC) is the BPTI/Kunitz inhibitor domain. Cystine bridges form between Cys7–Cys57, Cys16–Cys40, and Cys32–Cys53.

The protein belongs to the venom Kunitz-type family. In terms of tissue distribution, expressed by the venom gland.

The protein localises to the secreted. In terms of biological role, potent blocker of high-voltage-activated calcium ion channels in the nanomolar range, particularly the L-type channels in cerebellar granule cells. The sensitivity of L-, N- and P-type channels to CAC is tissue and species-dependent. Blocks the L-type current of cardiac cells, depressing cardiac contractility. This Dendroaspis angusticeps (Eastern green mamba) protein is Kunitz-type serine protease inhibitor homolog calcicludine.